The chain runs to 160 residues: 6-hydroxypseudooxynicotine dehydrogenase complex subunit beta (160 aa).

Positions 4 to 80 (FRLTVEVNGV…NSRIETVESL (77 aa)) constitute a 2Fe-2S ferredoxin-type domain. [2Fe-2S] cluster is bound by residues cysteine 42, cysteine 47, cysteine 50, cysteine 62, cysteine 101, cysteine 104, cysteine 137, and cysteine 139.

Heterohexamer of 2 alpha (kdhA), 2 beta (kdhB) and 2 gamma (kdhC) subunit. Dimer of heterotrimers. [2Fe-2S] cluster serves as cofactor.

The enzyme catalyses 6-hydroxypseudooxynicotine + A + H2O = 2,6-dihydroxypseudooxynicotine + AH2. Its pathway is alkaloid degradation; nicotine degradation. Molybdo-flavoprotein enzyme complex involved in nicotine degradation. The subunit gamma (large subunit) contains the substrate-binding sites, the subunit alpha (medium subunit) binds FAD and the subunit beta (small subunit) has a 2Fe-2S ferredoxin-type domain which binds 2 2Fe-2S clusters. The polypeptide is 6-hydroxypseudooxynicotine dehydrogenase complex subunit beta (kdhB) (Paenarthrobacter nicotinovorans (Arthrobacter nicotinovorans)).